Consider the following 248-residue polypeptide: Ferric nitrobindin-like protein (248 aa).

Composition is skewed to polar residues over residues 1–25 (MSSDKANNQSPDQGANTPAESTNSG) and 32–43 (QAVNLAAEQSKS). Residues 1–49 (MSSDKANNQSPDQGANTPAESTNSGPKLDGNQAVNLAAEQSKSTADKNL) are disordered. The GXWXGXG motif lies at 82–88 (GVWRGQG). The disordered stretch occupies residues 118 to 147 (SRTWKINPPAEEGAEADGDEASAESAGEPE). A compositionally biased stretch (acidic residues) spans 129–139 (EGAEADGDEAS).

This sequence belongs to the nitrobindin family.

This Corynebacterium urealyticum (strain ATCC 43042 / DSM 7109) protein is Ferric nitrobindin-like protein.